A 268-amino-acid chain; its full sequence is 4-hydroxy-tetrahydrodipicolinate reductase (268 aa).

NAD(+) contacts are provided by residues 8–13 (GAAGRM) and Asp35. Arg36 lines the NADP(+) pocket. NAD(+)-binding positions include 99–101 (GTT) and 123–126 (AANF). The active-site Proton donor/acceptor is His156. A (S)-2,3,4,5-tetrahydrodipicolinate-binding site is contributed by His157. Lys160 functions as the Proton donor in the catalytic mechanism. Position 166 to 167 (166 to 167 (GT)) interacts with (S)-2,3,4,5-tetrahydrodipicolinate.

This sequence belongs to the DapB family.

Its subcellular location is the cytoplasm. It carries out the reaction (S)-2,3,4,5-tetrahydrodipicolinate + NAD(+) + H2O = (2S,4S)-4-hydroxy-2,3,4,5-tetrahydrodipicolinate + NADH + H(+). The enzyme catalyses (S)-2,3,4,5-tetrahydrodipicolinate + NADP(+) + H2O = (2S,4S)-4-hydroxy-2,3,4,5-tetrahydrodipicolinate + NADPH + H(+). Its pathway is amino-acid biosynthesis; L-lysine biosynthesis via DAP pathway; (S)-tetrahydrodipicolinate from L-aspartate: step 4/4. Catalyzes the conversion of 4-hydroxy-tetrahydrodipicolinate (HTPA) to tetrahydrodipicolinate. The polypeptide is 4-hydroxy-tetrahydrodipicolinate reductase (Pseudomonas aeruginosa (strain LESB58)).